The primary structure comprises 408 residues: MGFITKAIPIVLAALSTVDGAKILEAGPHAETIPNKYIVVMKQDVSHEAFNAHATWVGNNFSRRPMRRGGSFKPMAGMQHKFSLGGTFKAYTGEFDEAMIKDISNHDDVDFIERDTVVKATAITQQDNVPSWGLARVGSKEAGGSTYYYDDTAGKGVTAYIIDTGIDIHHGDFGGRAKWGKNFVDKMDEDCNGHGSHVAGTVGGTKFGVAKGVNLVAVKVLDCEGSGSNSGVIMGMEWAMKEASGGGNSTAKAAGKSVMNMSLGGPRSEASNKAAKAIADAGIFMAVAAGNDNMDAQHSSPASEPSICTVAASSEDDSKADFSNYGAVVDIYAPGNEITSVKPGNGTDTLSGTSMASPHVCGLGAYLIGLGKEGGPGLCDTIKEMATDAIKNPGEGTTGKLIYNGSGK.

Positions 1 to 20 (MGFITKAIPIVLAALSTVDG) are cleaved as a signal peptide. The propeptide occupies 21-123 (AKILEAGPHA…RDTVVKATAI (103 aa)). In terms of domain architecture, Inhibitor I9 spans 36-119 (KYIVVMKQDV…DFIERDTVVK (84 aa)). The Peptidase S8 domain maps to 131 to 408 (SWGLARVGSK…GKLIYNGSGK (278 aa)). Catalysis depends on charge relay system residues Asp163 and His194. N-linked (GlcNAc...) asparagine glycans are attached at residues Asn248, Asn260, and Asn345. The active-site Charge relay system is the Ser354. N-linked (GlcNAc...) asparagine glycosylation is present at Asn404.

Belongs to the peptidase S8 family.

The protein localises to the secreted. Functionally, secreted subtilisin-like serine protease with keratinolytic activity that contributes to pathogenicity. This Arthroderma gypseum (strain ATCC MYA-4604 / CBS 118893) (Microsporum gypseum) protein is Subtilisin-like protease 6 (SUB6).